The primary structure comprises 357 residues: Inositol-tetrakisphosphate 1-kinase 3 (357 aa).

1D-myo-inositol 1,3,4-trisphosphate is bound by residues lysine 56 and lysine 98. ATP is bound by residues arginine 133 and lysine 183. Histidine 190 and lysine 222 together coordinate 1D-myo-inositol 1,3,4-trisphosphate. Residues 211–222 (QEFVNHGGVLFK), serine 237, and serine 262 contribute to the ATP site. Residues aspartate 302, aspartate 317, and asparagine 319 each contribute to the Mg(2+) site. Asparagine 319 is a binding site for 1D-myo-inositol 1,3,4-trisphosphate.

This sequence belongs to the ITPK1 family. As to quaternary structure, monomer. Requires Mg(2+) as cofactor.

It carries out the reaction 1D-myo-inositol 3,4,5,6-tetrakisphosphate + ATP = 1D-myo-inositol 1,3,4,5,6-pentakisphosphate + ADP + H(+). The enzyme catalyses 1D-myo-inositol 1,3,4-trisphosphate + ATP = 1D-myo-inositol 1,3,4,5-tetrakisphosphate + ADP + H(+). The catalysed reaction is 1D-myo-inositol 1,3,4-trisphosphate + ATP = 1D-myo-inositol 1,3,4,6-tetrakisphosphate + ADP + H(+). Kinase that can phosphorylate various inositol polyphosphate such as Ins(3,4,5,6)P4 or Ins(1,3,4)P3 and participates in phytic acid biosynthesis in developing seeds. Phytic acid is the primary storage form of phosphorus in cereal grains and other plant seeds. In Oryza sativa subsp. indica (Rice), this protein is Inositol-tetrakisphosphate 1-kinase 3 (ITPK3).